The following is a 330-amino-acid chain: Complement factor H-related protein 1 (330 aa).

The N-terminal stretch at 1-18 is a signal peptide; it reads MWLLVSVILISRISSVGG. 5 Sushi domains span residues 22-84, 85-142, 145-203, 206-264, and 273-329; these read FCDF…PKCL, RLCF…KCRS, TSCV…QCKD, GKCG…KCLH, and MENY…TCAK. Intrachain disulfides connect C23-C72, C55-C83, C87-C129, C114-C140, C147-C190, C176-C201, C208-C251, C237-C262, C266-C317, and C300-C327. N126 carries an N-linked (GlcNAc...) asparagine glycan. N194 is a glycosylation site (N-linked (GlcNAc...) asparagine).

In terms of assembly, head-to-tail homodimer and heterodimer with CFHR2 or CFHR5. As to quaternary structure, (Microbial infection) Interacts with C.albicans GPD2; the interaction is direct and leads to the degradation of C3. In terms of processing, N-glycosylated. Two forms are observed; one with a single side chain and the other with two. As to expression, expressed by the liver and secreted in plasma.

The protein localises to the secreted. Its function is as follows. Involved in complement regulation. The dimerized forms have avidity for tissue-bound complement fragments and efficiently compete with the physiological complement inhibitor CFH. Can associate with lipoproteins and may play a role in lipid metabolism. The sequence is that of Complement factor H-related protein 1 (CFHR1) from Homo sapiens (Human).